Here is a 187-residue protein sequence, read N- to C-terminus: UPF0340 protein SGO_0411 (187 aa).

The protein belongs to the UPF0340 family.

This Streptococcus gordonii (strain Challis / ATCC 35105 / BCRC 15272 / CH1 / DL1 / V288) protein is UPF0340 protein SGO_0411.